The primary structure comprises 302 residues: Snake venom metalloprotease inhibitor 02A10 (302 aa).

An N-terminal signal peptide occupies residues Met1 to Gly23. Positions Lys24–Gln47 are excised as a propeptide. A disordered region spans residues Trp32 to His302. Pro residues predominate over residues Leu33 to Pro44. Gln48 carries the post-translational modification Pyrrolidone carboxylic acid. The propeptide occupies Leu51–Gln58. Gln59 carries the post-translational modification Pyrrolidone carboxylic acid. The propeptide occupies Leu62–Gln69. Gln70 carries the pyrrolidone carboxylic acid modification. Positions Leu73–Gln80 are excised as a propeptide. Gln81 carries the post-translational modification Pyrrolidone carboxylic acid. Positions Leu84–Gln91 are excised as a propeptide. Pyrrolidone carboxylic acid is present on Gln92. A propeptide spanning residues Leu95–Gln102 is cleaved from the precursor. At Gln103 the chain carries Pyrrolidone carboxylic acid. A propeptide spanning residues Leu106–Gln113 is cleaved from the precursor. Residue Gln114 is modified to Pyrrolidone carboxylic acid. Positions Leu117–Gln124 are excised as a propeptide. Gln125 bears the Pyrrolidone carboxylic acid mark. Positions Leu128 to Gln135 are excised as a propeptide. The residue at position 136 (Gln136) is a Pyrrolidone carboxylic acid. Residues Leu139–Gln146 constitute a propeptide that is removed on maturation. Gln147 carries the post-translational modification Pyrrolidone carboxylic acid. Positions Leu150–Gln157 are excised as a propeptide. Pyrrolidone carboxylic acid is present on Gln158. The propeptide occupies Leu161–Gln168. Gln169 is subject to Pyrrolidone carboxylic acid. A propeptide spanning residues Leu172–Gln179 is cleaved from the precursor. Gln180 carries the pyrrolidone carboxylic acid modification. Positions Leu183–Gln190 are excised as a propeptide. Residue Gln191 is modified to Pyrrolidone carboxylic acid. Positions Leu194–Gln201 are excised as a propeptide. A Pyrrolidone carboxylic acid modification is found at Gln202. Residues Leu205–Gln212 constitute a propeptide that is removed on maturation. A Pyrrolidone carboxylic acid modification is found at Gln213. Residues Leu216 to Gln223 constitute a propeptide that is removed on maturation. Residue Gln224 is modified to Pyrrolidone carboxylic acid. A propeptide spanning residues Gln227–Lys273 is cleaved from the precursor. Composition is skewed to basic and acidic residues over residues Leu240–Glu255 and Glu262–Lys273. Cysteines 279 and 293 form a disulfide. The propeptide occupies Pro294 to His302.

This sequence in the C-terminal section; belongs to the natriuretic peptide family. As to expression, expressed by the venom gland.

The protein localises to the secreted. Its function is as follows. pEKW peptides may serve as metalloproteinase inhibitors during glandular storage. Their inhibition may be instantly disengaged, by dilution or physiochemical change, when venom is injected into tissue of the victim. Functionally, exhibits hypotensive and vasodepressor activity. Acts by activating natriuretic receptors (NPR1 and/or NPR2 and/or NPR3). This chain is Snake venom metalloprotease inhibitor 02A10 (Svmpi-Cce12), found in Cerastes cerastes (Horned desert viper).